The primary structure comprises 820 residues: Phospholipase D alpha 3 (820 aa).

The C2 domain maps to 1–133 (MTEQLLLHGT…ITGQPIDRWL (133 aa)). A Ca(2+)-binding site is contributed by Asp-194. A PLD phosphodiesterase 1 domain is found at 334–371 (TMFTHHQKTIVVDSEVDGSLTKRRIVSFLGGIDLCDGR). Residues His-339, Lys-341, and Asp-346 contribute to the active site. His-339 contributes to the a 1,2-diacyl-sn-glycero-3-phosphate binding site. Residues His-377 and His-411 each coordinate Ca(2+). A 1,2-diacyl-sn-glycero-3-phosphate contacts are provided by Gln-528 and His-667. Residues 662–689 (FMIYVHSKMMIVDDEYIIIGSANINQRS) form the PLD phosphodiesterase 2 domain. Active-site residues include His-667, Lys-669, and Asp-674. Glu-730 provides a ligand contact to Ca(2+).

It belongs to the phospholipase D family. C2-PLD subfamily. Ca(2+) is required as a cofactor. Expressed in buds, flowers, siliques, stems, old leaves and roots. Expressed in the sieve elements.

It is found in the cytoplasm. Its subcellular location is the membrane. The enzyme catalyses a 1,2-diacyl-sn-glycero-3-phosphocholine + H2O = a 1,2-diacyl-sn-glycero-3-phosphate + choline + H(+). Functionally, hydrolyzes glycerol-phospholipids at the terminal phosphodiesteric bond to generate phosphatidic acids (PA). Active with phosphatidylcholine (PC), phosphatidylethanolamine (PE), phosphatidylglycerol (PG), and phosphatidylserine (PS) as substrates. No activity toward phosphatidylinositol (PI) or PIP2. Positively mediates plant responses to hyperosmotic stresses and promotes root growth, flowering, and stress avoidance. Not involved in the abscisic acid regulation of stomatal movement and transpirational water loss. This chain is Phospholipase D alpha 3, found in Arabidopsis thaliana (Mouse-ear cress).